The chain runs to 25 residues: Neuromedin-U-25 (25 aa).

The residue at position 25 (N25) is an Asparagine amide.

Belongs to the NmU family.

The protein localises to the secreted. In terms of biological role, stimulates uterine smooth muscle contraction and causes selective vasoconstriction. The polypeptide is Neuromedin-U-25 (Rana temporaria (European common frog)).